A 256-amino-acid polypeptide reads, in one-letter code: Transcription factor CAULIFLOWER (256 aa).

One can recognise an MADS-box domain in the interval 1 to 61 (MGRGRVQLKR…GKLFEYTSES (61 aa)). A K-box domain is found at 90-180 (QPNWSMEYSR…TKQIKERENI (91 aa)).

Homodimer capable of binding to CArG-box sequences.

The protein localises to the nucleus. Functionally, probable transcription factor that promotes early floral meristem identity in synergy with APETALA1, FRUITFULL and LEAFY. Is required subsequently for the transition of an inflorescence meristem into a floral meristem. Seems to be partially redundant to the function of APETALA1. The protein is Transcription factor CAULIFLOWER (CAL) of Arabidopsis lyrata subsp. lyrata (Lyre-leaved rock-cress).